Here is a 417-residue protein sequence, read N- to C-terminus: Fatty-acid peroxygenase (417 aa).

Residue C363 coordinates heme.

The protein belongs to the cytochrome P450 family. It depends on heme as a cofactor.

It catalyses the reaction a 1,2-saturated fatty acid + H2O2 = a 2-hydroxy fatty acid + H2O. It carries out the reaction a 2,3-saturated fatty acid + H2O2 = a 3-hydroxy fatty acid + H2O. The enzyme catalyses tetradecanoate + H2O2 = (3R)-hydroxytetradecanoate + H2O. The catalysed reaction is tetradecanoate + H2O2 = (2R)-hydroxytetradecanoate + H2O. It catalyses the reaction tetradecanoate + H2O2 = (2S)-hydroxytetradecanoate + H2O. Functionally, catalyzes the alpha- and beta-hydroxylation of myristic acid in the presence of hydrogen peroxide. The sequence is that of Fatty-acid peroxygenase (cypC) from Bacillus subtilis (strain 168).